The following is a 378-amino-acid chain: D-alanine--D-alanine ligase (378 aa).

Positions Lys149–Glu374 constitute an ATP-grasp domain. Position 189–247 (Glu189–Glu247) interacts with ATP. Residues Asp328, Glu341, and Asn343 each coordinate Mg(2+).

The protein belongs to the D-alanine--D-alanine ligase family. Requires Mg(2+) as cofactor. The cofactor is Mn(2+).

The protein resides in the cytoplasm. The enzyme catalyses 2 D-alanine + ATP = D-alanyl-D-alanine + ADP + phosphate + H(+). It functions in the pathway cell wall biogenesis; peptidoglycan biosynthesis. Functionally, cell wall formation. This Bifidobacterium animalis subsp. lactis (strain AD011) protein is D-alanine--D-alanine ligase.